Consider the following 137-residue polypeptide: Nucleoside diphosphate kinase (137 aa).

Lysine 9, phenylalanine 57, arginine 85, threonine 91, arginine 102, and asparagine 112 together coordinate ATP. The active-site Pros-phosphohistidine intermediate is the histidine 115.

Belongs to the NDK family. In terms of assembly, homotetramer. It depends on Mg(2+) as a cofactor.

It localises to the cytoplasm. The catalysed reaction is a 2'-deoxyribonucleoside 5'-diphosphate + ATP = a 2'-deoxyribonucleoside 5'-triphosphate + ADP. It carries out the reaction a ribonucleoside 5'-diphosphate + ATP = a ribonucleoside 5'-triphosphate + ADP. Functionally, major role in the synthesis of nucleoside triphosphates other than ATP. The ATP gamma phosphate is transferred to the NDP beta phosphate via a ping-pong mechanism, using a phosphorylated active-site intermediate. This chain is Nucleoside diphosphate kinase, found in Thermus thermophilus (strain ATCC 27634 / DSM 579 / HB8).